We begin with the raw amino-acid sequence, 172 residues long: Putative metal-dependent hydrolase OB0782 (172 aa).

Zn(2+) is bound by residues His-64, His-155, and His-159.

Belongs to the metal hydrolase YfiT family. In terms of assembly, homodimer. Zn(2+) serves as cofactor.

It is found in the cytoplasm. Its function is as follows. Possible metal-dependent hydrolase. The sequence is that of Putative metal-dependent hydrolase OB0782 from Oceanobacillus iheyensis (strain DSM 14371 / CIP 107618 / JCM 11309 / KCTC 3954 / HTE831).